The primary structure comprises 394 residues: ATP phosphoribosyltransferase regulatory subunit (394 aa).

The protein belongs to the class-II aminoacyl-tRNA synthetase family. HisZ subfamily. As to quaternary structure, heteromultimer composed of HisG and HisZ subunits.

It is found in the cytoplasm. The protein operates within amino-acid biosynthesis; L-histidine biosynthesis; L-histidine from 5-phospho-alpha-D-ribose 1-diphosphate: step 1/9. Functionally, required for the first step of histidine biosynthesis. May allow the feedback regulation of ATP phosphoribosyltransferase activity by histidine. This is ATP phosphoribosyltransferase regulatory subunit from Saccharophagus degradans (strain 2-40 / ATCC 43961 / DSM 17024).